The sequence spans 225 residues: Uridylate kinase (225 aa).

Residue 9 to 10 coordinates ATP; it reads GS. A UMP-binding site is contributed by Gly44. Residues Gly45 and Arg49 each coordinate ATP. Residues Asp66 and 114-120 contribute to the UMP site; that span reads THPGHTT. ATP is bound by residues Thr140, Asn141, Tyr146, and Asp149.

The protein belongs to the UMP kinase family. In terms of assembly, homohexamer.

It is found in the cytoplasm. The enzyme catalyses UMP + ATP = UDP + ADP. It participates in pyrimidine metabolism; CTP biosynthesis via de novo pathway; UDP from UMP (UMPK route): step 1/1. Inhibited by UTP. Catalyzes the reversible phosphorylation of UMP to UDP. The polypeptide is Uridylate kinase (Thermococcus gammatolerans (strain DSM 15229 / JCM 11827 / EJ3)).